The primary structure comprises 1002 residues: Lon protease homolog, mitochondrial (1002 aa).

One can recognise a Lon N-terminal domain in the interval 102-313 (VIALPLPHRP…LTLELVKKEM (212 aa)). An ATP-binding site is contributed by 468–475 (GPPGVGKT). The region spanning 811–995 (QTPVGVVMGL…NEIFDIAFQS (185 aa)) is the Lon proteolytic domain. Active-site residues include Ser901 and Lys944.

It belongs to the peptidase S16 family. In terms of assembly, homohexamer or homoheptamer. Organized in a ring with a central cavity.

Its subcellular location is the mitochondrion matrix. The catalysed reaction is Hydrolysis of proteins in presence of ATP.. In terms of biological role, ATP-dependent serine protease that mediates the selective degradation of misfolded, unassembled or oxidatively damaged polypeptides as well as certain short-lived regulatory proteins in the mitochondrial matrix. May also have a chaperone function in the assembly of inner membrane protein complexes. Participates in the regulation of mitochondrial gene expression and in the maintenance of the integrity of the mitochondrial genome. Binds to mitochondrial DNA in a site-specific manner. In Oryza sativa subsp. indica (Rice), this protein is Lon protease homolog, mitochondrial.